Consider the following 220-residue polypeptide: Ribosomal RNA large subunit methyltransferase E (220 aa).

S-adenosyl-L-methionine contacts are provided by Gly60, Trp62, Asp92, Asp108, and Asp133. Lys173 functions as the Proton acceptor in the catalytic mechanism. The tract at residues 197–220 (RKPKASRDKSSETFILGRQLKQPR) is disordered.

It belongs to the class I-like SAM-binding methyltransferase superfamily. RNA methyltransferase RlmE family.

It is found in the cytoplasm. The catalysed reaction is uridine(2552) in 23S rRNA + S-adenosyl-L-methionine = 2'-O-methyluridine(2552) in 23S rRNA + S-adenosyl-L-homocysteine + H(+). Specifically methylates the uridine in position 2552 of 23S rRNA at the 2'-O position of the ribose in the fully assembled 50S ribosomal subunit. In Burkholderia ambifaria (strain ATCC BAA-244 / DSM 16087 / CCUG 44356 / LMG 19182 / AMMD) (Burkholderia cepacia (strain AMMD)), this protein is Ribosomal RNA large subunit methyltransferase E.